A 217-amino-acid polypeptide reads, in one-letter code: Killer cell lectin-like receptor subfamily B member 1F (217 aa).

At 1–45 the chain is on the cytoplasmic side; it reads MDTSKVHGNVKPFRCPGYKQASSPSFSPDACRCPHWHHLALKSGC. Residues 31 to 34 carry the LCK-binding motif motif; the sequence is CRCP. The chain crosses the membrane as a helical; Signal-anchor for type II membrane protein span at residues 46–66; the sequence is AGLILLLLSLIGLSVLVRFLV. Residues 67–217 are Extracellular-facing; it reads QKPPIEKCSV…WICQKTLIHV (151 aa). Residue N81 is glycosylated (N-linked (GlcNAc...) asparagine). Residues 101-211 form the C-type lectin domain; that stretch reads HWNKCLFVSQ…CSSDNHWICQ (111 aa). 2 disulfide bridges follow: C122-C210 and C189-C202.

In terms of tissue distribution, highly expressed in dendritic cells. Detectable in natural killer cells.

It localises to the membrane. In terms of biological role, binds CLEC2I/Clr-g leading to activation of natural killer cells or costimulation of IL-2 production and proliferation of T-cells in response to antigen stimulation. May contribute to the formation of the immunological synapse between T-cells and antigen-presenting dendritic cells. The polypeptide is Killer cell lectin-like receptor subfamily B member 1F (Klrb1f) (Mus musculus (Mouse)).